Reading from the N-terminus, the 183-residue chain is Globin-like protein 26 (183 aa).

Positions 1 to 25 are disordered; the sequence is MGSSTSTPAPPPKKNKPEGRKADNQ. A lipid anchor (N-myristoyl glycine) is attached at glycine 2. A Nuclear localization signal motif is present at residues 12–18; sequence PKKNKPE. A Globin domain is found at 26 to 166; that stretch reads ILNSYQKSIV…VVDQLRFGYS (141 aa). Heme contacts are provided by histidine 77 and histidine 109.

It belongs to the globin family. Homodimer. Occurs in an equilibrium of monomeric and dimeric forms in solution. As to expression, detected in the head mesodermal cell. In the tail region, detected in the stomatointestinal and anal depressor muscle cells.

The protein resides in the cytoplasm. The protein localises to the nucleus lamina. It localises to the cell membrane. Its function is as follows. Plays a role in electron transport. Utilizes the bis-histidyl hexacoordinated complex with iron to transfer electrons to cytochrome c and molecular oxygen. Plays a regulatory role in the periodicity of the defecation cycle under oxidative stress conditions. Not involved in imparting protection against general conditions of oxidative stress. May participate in redox reactions under anaerobic conditions. The polypeptide is Globin-like protein 26 (Caenorhabditis elegans).